A 633-amino-acid chain; its full sequence is MA3 DOMAIN-CONTAINING TRANSLATION REGULATORY FACTOR 4 (633 aa).

MI domains follow at residues 56-177, 220-341, 351-472, and 514-633; these read DYKR…RAKK, ETKR…ERSD, RFKK…EISN, and DAKD…STDS. A Nuclear localization signal 1 motif is present at residues 94–101; the sequence is VKRLVSMA. Residues 389-396 carry the Nuclear localization signal 2 motif; that stretch reads LKKLITLA.

The protein belongs to the PDCD4 family. In terms of assembly, binds to EIF4A1. The association with ribosomes is modulated by cellular energy status and TOR activity. As to expression, mostly expressed, at low levels, in rosette leaves and flower buds, and, to a lower extent, in roots, stems, cauline leaves and flowers.

It localises to the nucleus. The protein localises to the cytoplasm. It is found in the cytosol. In terms of biological role, involved in target of rapamycin (TOR)-regulated translation control, especially under energy-deficient conditions. In Arabidopsis thaliana (Mouse-ear cress), this protein is MA3 DOMAIN-CONTAINING TRANSLATION REGULATORY FACTOR 4.